The primary structure comprises 327 residues: D-alanine--D-alanine ligase (327 aa).

The region spanning 113–312 is the ATP-grasp domain; sequence KRLWMTYGLA…YEDFVMQVVA (200 aa). 139 to 194 contributes to the ATP binding site; it reads AADLGLPLIVKPAREGSSIGLTKVTAADQMRAAFEKAAALDNDVIAETFIDGAELT. Residues Asp-266, Glu-279, and Asn-281 each coordinate Mg(2+).

Belongs to the D-alanine--D-alanine ligase family. The cofactor is Mg(2+). It depends on Mn(2+) as a cofactor.

The protein resides in the cytoplasm. The catalysed reaction is 2 D-alanine + ATP = D-alanyl-D-alanine + ADP + phosphate + H(+). Its pathway is cell wall biogenesis; peptidoglycan biosynthesis. Its function is as follows. Cell wall formation. The chain is D-alanine--D-alanine ligase from Cupriavidus necator (strain ATCC 17699 / DSM 428 / KCTC 22496 / NCIMB 10442 / H16 / Stanier 337) (Ralstonia eutropha).